Here is a 351-residue protein sequence, read N- to C-terminus: Phosphate acyltransferase (351 aa).

It belongs to the PlsX family. Homodimer. Probably interacts with PlsY.

The protein resides in the cytoplasm. It catalyses the reaction a fatty acyl-[ACP] + phosphate = an acyl phosphate + holo-[ACP]. It participates in lipid metabolism; phospholipid metabolism. Functionally, catalyzes the reversible formation of acyl-phosphate (acyl-PO(4)) from acyl-[acyl-carrier-protein] (acyl-ACP). This enzyme utilizes acyl-ACP as fatty acyl donor, but not acyl-CoA. The sequence is that of Phosphate acyltransferase from Neisseria meningitidis serogroup B (strain ATCC BAA-335 / MC58).